The sequence spans 73 residues: MKSSMAVLLVMGLIIFTLDKCYSTDDKPIGKCGEKQRSKLCRVCHNRSGIDNYYSGCCIYDGTYFMCLDMLHP.

The N-terminal stretch at 1–23 (MKSSMAVLLVMGLIIFTLDKCYS) is a signal peptide.

In terms of processing, contains 3 disulfide bonds. In terms of tissue distribution, expressed by the venom gland.

Its subcellular location is the secreted. The protein is U-scoloptoxin(03)-Ssd1b of Scolopendra dehaani (Thai centipede).